Consider the following 200-residue polypeptide: Probable GTP-binding protein EngB (200 aa).

An EngB-type G domain is found at 26–200 (SIPEVALAGR…IYEIAQCIKK (175 aa)). Residues 34–41 (GRSNVGKS), 61–65 (GCTRQ), 80–83 (DLPG), 147–150 (TKID), and 179–181 (VSS) contribute to the GTP site. Ser-41 and Thr-63 together coordinate Mg(2+).

It belongs to the TRAFAC class TrmE-Era-EngA-EngB-Septin-like GTPase superfamily. EngB GTPase family. The cofactor is Mg(2+).

Functionally, necessary for normal cell division and for the maintenance of normal septation. This is Probable GTP-binding protein EngB from Ehrlichia ruminantium (strain Gardel).